A 3890-amino-acid chain; its full sequence is Extracellular matrix-binding protein EbhB (3890 aa).

The signal sequence occupies residues 1–39 (MNYRDKIQKFSIRKYTVGTFSTVIATLVFLGFNTSQAHA). Residues 41 to 59 (ETNQPASVVKQKQQSNNEQ) show a composition bias toward polar residues. Disordered stretches follow at residues 41 to 152 (ETNQ…GNDN), 249 to 277 (MPQR…PRSV), 1347 to 1372 (NEKA…NATT), and 2418 to 2438 (TITP…TLTA). Over residues 65 to 78 (SQVQNSQNSQNSQS) the composition is skewed to low complexity. Residues 79–117 (LSATHENEQPNNSQANLVNQKVAQSSTTNDEQPASQNVN) are compositionally biased toward polar residues. Residues 130–140 (PDKEESKHKQN) show a composition bias toward basic and acidic residues. 4 stretches are compositionally biased toward polar residues: residues 141–151 (ESQSANKNGND), 250–266 (PQRQ…QTRS), 1360–1372 (YRTT…NATT), and 2427–2438 (HSVSSNPSTLTA). 13 consecutive FIVAR domains span residues 2524-2580 (AKNH…VSDA), 2610-2666 (SKNN…ISDE), 2687-2750 (DTHA…VQSA), 2780-2836 (AKTK…IAAE), 2864-2919 (AKTQ…IRQN), 2947-3002 (AKNQ…INTN), 3030-3085 (AKTQ…INDK), 3154-3212 (AMTK…VNQK), 3280-3339 (AMTG…VNNA), 3407-3465 (AMGN…VNRA), 3533-3591 (AMGN…VTEA), 3659-3717 (AMNT…ITQK), and 3785-3843 (AMAN…VEAA).

This Staphylococcus aureus (strain N315) protein is Extracellular matrix-binding protein EbhB (ebhB).